A 276-amino-acid polypeptide reads, in one-letter code: Probable ABC transporter permease protein PH1036 (276 aa).

A run of 6 helical transmembrane segments spans residues 12–32 (IAWS…MASV), 75–95 (IVAI…AYAF), 109–129 (FIVL…YFLL), 137–157 (TFRG…IFFM), 186–206 (IVLP…FTWV), and 241–261 (GLLT…YALF). The region spanning 70–261 (LKNSLIVAIP…LVPLLVYALF (192 aa)) is the ABC transmembrane type-1 domain.

It belongs to the binding-protein-dependent transport system permease family. MalFG subfamily.

The protein resides in the cell membrane. Its function is as follows. Probably part of a binding-protein-dependent transport system PH1036/38/39. Probably responsible for the translocation of the substrate across the membrane. This Pyrococcus horikoshii (strain ATCC 700860 / DSM 12428 / JCM 9974 / NBRC 100139 / OT-3) protein is Probable ABC transporter permease protein PH1036.